Here is a 201-residue protein sequence, read N- to C-terminus: Regulator of G-protein signaling 1 (201 aa).

In terms of domain architecture, RGS spans 75-191; sequence SLEKLLVSEE…LKSEIFFRLA (117 aa).

Its subcellular location is the cell membrane. It localises to the cytoplasm. The protein localises to the cytosol. Functionally, regulates G protein-coupled receptor signaling cascades, including signaling downstream of the N-formylpeptide chemoattractant receptors and leukotriene receptors. Inhibits B cell chemotaxis. Inhibits signal transduction by increasing the GTPase activity of G protein alpha subunits, thereby driving them into their inactive GDP-bound form. This is Regulator of G-protein signaling 1 (rgs1) from Xenopus laevis (African clawed frog).